We begin with the raw amino-acid sequence, 1091 residues long: Protein JSN1 (1091 aa).

Disordered regions lie at residues 31 to 51 (EYEN…KLGS) and 75 to 131 (HHSK…GSLT). Polar residues predominate over residues 99–111 (TVASKTPRASPSR). The residue at position 129 (serine 129) is a Phosphoserine. Threonine 131 carries the phosphothreonine modification. Residues serine 160 and serine 168 each carry the phosphoserine modification. The RRM domain maps to 340 to 426 (NTISISNVFP…APSKISFAKI (87 aa)). Composition is skewed to low complexity over residues 482-494 (QQSQ…NHSS) and 507-520 (NNNN…NNSA). Disordered stretches follow at residues 482 to 534 (QQSQ…PPPN) and 568 to 591 (HKGT…EFDP). The PUM-HD domain occupies 557 to 913 (QINSLIKKSL…RLLEEVGLAS (357 aa)). The segment covering 568–577 (HKGTSDTQNF) has biased composition (polar residues). Pumilio repeat units follow at residues 617–652 (AMLD…IMLR), 653–689 (KTSK…QVTQ), 690–724 (GVKD…FIFE), 725–760 (SIIA…QSIV), and 801–837 (RLTK…IILD). Residues 911-981 (LASPSSTHNK…GSSASTLSPG (71 aa)) form a disordered region. Position 913 is a phosphoserine (serine 913). 2 stretches are compositionally biased toward low complexity: residues 915–935 (SSTH…SISH) and 951–979 (SVSS…STLS).

The polypeptide is Protein JSN1 (JSN1) (Saccharomyces cerevisiae (strain ATCC 204508 / S288c) (Baker's yeast)).